Here is a 156-residue protein sequence, read N- to C-terminus: Small ribosomal subunit protein uS7 (156 aa).

This sequence belongs to the universal ribosomal protein uS7 family. In terms of assembly, part of the 30S ribosomal subunit. Contacts proteins S9 and S11.

Its function is as follows. One of the primary rRNA binding proteins, it binds directly to 16S rRNA where it nucleates assembly of the head domain of the 30S subunit. Is located at the subunit interface close to the decoding center, probably blocks exit of the E-site tRNA. The polypeptide is Small ribosomal subunit protein uS7 (Acetivibrio thermocellus (strain ATCC 27405 / DSM 1237 / JCM 9322 / NBRC 103400 / NCIMB 10682 / NRRL B-4536 / VPI 7372) (Clostridium thermocellum)).